Here is a 41-residue protein sequence, read N- to C-terminus: Large ribosomal subunit protein bL36 (41 aa).

Belongs to the bacterial ribosomal protein bL36 family.

In Bartonella henselae (strain ATCC 49882 / DSM 28221 / CCUG 30454 / Houston 1) (Rochalimaea henselae), this protein is Large ribosomal subunit protein bL36.